Consider the following 653-residue polypeptide: UvrABC system protein B (653 aa).

The Helicase ATP-binding domain maps to 25–182 (EGIERGVREQ…EKLVELQYKS (158 aa)). 38 to 45 (GVTGSGKT) is a binding site for ATP. Positions 91–114 (YYDYYQPEAYIPHSDVYIEKDALI) match the Beta-hairpin motif. Residues 429-591 (QIADVVNESQ…ITPKSISKSV (163 aa)) form the Helicase C-terminal domain. The region spanning 616 to 651 (EEDIIKLQKEMLLHAENLEFEKALEIRNQINKLSQH) is the UVR domain.

This sequence belongs to the UvrB family. Forms a heterotetramer with UvrA during the search for lesions. Interacts with UvrC in an incision complex.

It localises to the cytoplasm. In terms of biological role, the UvrABC repair system catalyzes the recognition and processing of DNA lesions. A damage recognition complex composed of 2 UvrA and 2 UvrB subunits scans DNA for abnormalities. Upon binding of the UvrA(2)B(2) complex to a putative damaged site, the DNA wraps around one UvrB monomer. DNA wrap is dependent on ATP binding by UvrB and probably causes local melting of the DNA helix, facilitating insertion of UvrB beta-hairpin between the DNA strands. Then UvrB probes one DNA strand for the presence of a lesion. If a lesion is found the UvrA subunits dissociate and the UvrB-DNA preincision complex is formed. This complex is subsequently bound by UvrC and the second UvrB is released. If no lesion is found, the DNA wraps around the other UvrB subunit that will check the other stand for damage. In Anaplasma phagocytophilum (strain HZ), this protein is UvrABC system protein B.